Here is a 169-residue protein sequence, read N- to C-terminus: Large ribosomal subunit protein uL10 (169 aa).

This sequence belongs to the universal ribosomal protein uL10 family. As to quaternary structure, part of the ribosomal stalk of the 50S ribosomal subunit. The N-terminus interacts with L11 and the large rRNA to form the base of the stalk. The C-terminus forms an elongated spine to which L12 dimers bind in a sequential fashion forming a multimeric L10(L12)X complex.

Its function is as follows. Forms part of the ribosomal stalk, playing a central role in the interaction of the ribosome with GTP-bound translation factors. The polypeptide is Large ribosomal subunit protein uL10 (Rickettsia typhi (strain ATCC VR-144 / Wilmington)).